Here is a 47-residue protein sequence, read N- to C-terminus: Light-harvesting protein B800/850/890 alpha-2 chain (47 aa).

Topologically, residues 1 to 12 (MWRMWKILDYRR) are cytoplasmic. Residues 13-33 (TVVLAHVGMAVLALLIHFILL) form a helical membrane-spanning segment. His-29 is a binding site for a bacteriochlorophyll. Residues 34 to 47 (STESFNWLEGNPYG) lie on the Periplasmic side of the membrane.

Belongs to the antenna complex alpha subunit family. In terms of assembly, the core complex is formed by different alpha and beta chains, binding bacteriochlorophyll molecules, and arranged most probably in tetrameric structures disposed around the reaction center. The non-pigmented gamma chains may constitute additional components.

It is found in the cell inner membrane. Antenna complexes are light-harvesting systems, which transfer the excitation energy to the reaction centers. The polypeptide is Light-harvesting protein B800/850/890 alpha-2 chain (Halorhodospira halophila (strain DSM 244 / SL1) (Ectothiorhodospira halophila (strain DSM 244 / SL1))).